Reading from the N-terminus, the 1492-residue chain is DNA polymerase alpha catalytic subunit (1492 aa).

3 disordered regions span residues 34–112 (DFIV…VEQS), 162–195 (SVTL…DVNP), and 210–234 (ANSY…EMAN). A compositionally biased stretch (basic and acidic residues) spans 42–55 (YGYRDHGGEIWDRD). A compositionally biased stretch (polar residues) spans 93-105 (NAASTNPSAQQKP). Residues 166-178 (ESREEQERRRQSE) are compositionally biased toward basic and acidic residues. Composition is skewed to polar residues over residues 184-194 (ANIGQNQSDVN) and 210-224 (ANSY…SVSK). Cysteine 1314, cysteine 1317, cysteine 1341, cysteine 1344, cysteine 1375, cysteine 1380, cysteine 1393, and cysteine 1398 together coordinate Zn(2+). The segment at 1314 to 1344 (CPHCAHNYHFPGILVPSSNNTELTGLACVKC) adopts a CysA-type zinc-finger fold. The CysB motif motif lies at 1375–1398 (CKEPQCGMKTNQLLLNNKCIVKGC).

The protein belongs to the DNA polymerase type-B family.

The protein resides in the nucleus. The catalysed reaction is DNA(n) + a 2'-deoxyribonucleoside 5'-triphosphate = DNA(n+1) + diphosphate. Polymerase alpha in a complex with DNA primase is a replicative polymerase. The sequence is that of DNA polymerase alpha catalytic subunit from Sterkiella nova (Ciliate).